A 471-amino-acid chain; its full sequence is 7-dehydrocholesterol reductase (471 aa).

Helical transmembrane passes span 36 to 56, 95 to 115, 144 to 164, 173 to 193, 233 to 253, 262 to 282, 302 to 322, and 327 to 347; these read LVSV…FIMA, LYAL…DFCH, LQAW…LSWF, WIPL…FAMI, LFFN…SFAA, VTNS…DFFW, LGWG…LYLV, and QLST…YYIF. NADP(+)-binding positions include Lys-354, Arg-358, Leu-391, Trp-396, and 403–404; that span reads NY. Residues 416–436 traverse the membrane as a helical segment; the sequence is LACGGGHLLPYFYIIYMTILL. NADP(+) contacts are provided by residues Asp-443, 447 to 451, and Tyr-458; that span reads CANKY.

This sequence belongs to the ERG4/ERG24 family. In terms of assembly, interacts with DHCR24; this interaction regulates DHCR7 activity. Interacts with TMEM147. Highest expression is detected in liver, followed by kidney and brain.

It is found in the endoplasmic reticulum membrane. The catalysed reaction is cholesterol + NADP(+) = 7-dehydrocholesterol + NADPH + H(+). It catalyses the reaction 7-dehydrodesmosterol + NADPH + H(+) = desmosterol + NADP(+). The enzyme catalyses 5,6alpha-epoxy-5alpha-cholestan-3beta-ol + H2O = 5alpha-cholestane-3beta,5,6beta-triol. It carries out the reaction 5,6beta-epoxy-5beta-cholestan-3beta-ol + H2O = 5alpha-cholestane-3beta,5,6beta-triol. The protein operates within steroid biosynthesis; cholesterol biosynthesis. In terms of biological role, oxidoreductase that catalyzes the last step of the cholesterol synthesis pathway, which transforms cholesta-5,7-dien-3beta-ol (7-dehydrocholesterol,7-DHC) into cholesterol by reducing the C7-C8 double bond of its sterol core. Can also metabolize cholesta-5,7,24-trien-3beta-ol (7-dehydrodemosterol, 7-DHD) to desmosterol, which is then metabolized by the Delta(24)-sterol reductase (DHCR24) to cholesterol. Modulates ferroptosis (a form of regulated cell death driven by iron-dependent lipid peroxidation) through the metabolic breakdown of the anti-ferroptotic metabolites 7-DHC and 7-DHD which, when accumulated, divert the propagation of peroxyl radical-mediated damage from phospholipid components to its sterol core, protecting plasma and mitochondrial membranes from phospholipid autoxidation. Functionally, component of the microsomal antiestrogen binding site (AEBS), a multiproteic complex at the ER membrane that consists of an association between cholestenol Delta-isomerase/EBP and DHCR7. This complex is responsible for cholesterol-5,6-epoxide hydrolase (ChEH) activity, which consists in the hydration of cholesterol-5,6-epoxides (5,6-EC) into cholestane-3beta,5alpha,6beta-triol (CT). The precise role of each component of this complex has not been described yet. The sequence is that of 7-dehydrocholesterol reductase (Dhcr7) from Rattus norvegicus (Rat).